Consider the following 301-residue polypeptide: 33 kDa chaperonin (301 aa).

2 disulfides stabilise this stretch: Cys239–Cys241 and Cys272–Cys275.

This sequence belongs to the HSP33 family. Under oxidizing conditions two disulfide bonds are formed involving the reactive cysteines. Under reducing conditions zinc is bound to the reactive cysteines and the protein is inactive.

The protein resides in the cytoplasm. Its function is as follows. Redox regulated molecular chaperone. Protects both thermally unfolding and oxidatively damaged proteins from irreversible aggregation. Plays an important role in the bacterial defense system toward oxidative stress. In Trichormus variabilis (strain ATCC 29413 / PCC 7937) (Anabaena variabilis), this protein is 33 kDa chaperonin.